A 409-amino-acid polypeptide reads, in one-letter code: Na(+)-translocating NADH-quinone reductase subunit F (409 aa).

A helical membrane pass occupies residues 5–25 (FIFGIGAFTAIVLVLAVVILI). The 2Fe-2S ferredoxin-type domain occupies 34–128 (GDITISINND…SMDVELPEEV (95 aa)). [2Fe-2S] cluster is bound by residues Cys-71, Cys-77, Cys-80, and Cys-112. The region spanning 131–271 (VKKWECTVIS…SGPFGEFFAK (141 aa)) is the FAD-binding FR-type domain.

It belongs to the NqrF family. Composed of six subunits; NqrA, NqrB, NqrC, NqrD, NqrE and NqrF. The cofactor is [2Fe-2S] cluster. FAD is required as a cofactor.

Its subcellular location is the cell inner membrane. It catalyses the reaction a ubiquinone + n Na(+)(in) + NADH + H(+) = a ubiquinol + n Na(+)(out) + NAD(+). Functionally, NQR complex catalyzes the reduction of ubiquinone-1 to ubiquinol by two successive reactions, coupled with the transport of Na(+) ions from the cytoplasm to the periplasm. The first step is catalyzed by NqrF, which accepts electrons from NADH and reduces ubiquinone-1 to ubisemiquinone by a one-electron transfer pathway. The polypeptide is Na(+)-translocating NADH-quinone reductase subunit F (Mannheimia succiniciproducens (strain KCTC 0769BP / MBEL55E)).